An 89-amino-acid chain; its full sequence is Small ribosomal subunit protein uS15 (89 aa).

Belongs to the universal ribosomal protein uS15 family. In terms of assembly, part of the 30S ribosomal subunit. Forms a bridge to the 50S subunit in the 70S ribosome, contacting the 23S rRNA.

Its function is as follows. One of the primary rRNA binding proteins, it binds directly to 16S rRNA where it helps nucleate assembly of the platform of the 30S subunit by binding and bridging several RNA helices of the 16S rRNA. Functionally, forms an intersubunit bridge (bridge B4) with the 23S rRNA of the 50S subunit in the ribosome. The sequence is that of Small ribosomal subunit protein uS15 from Chloroherpeton thalassium (strain ATCC 35110 / GB-78).